We begin with the raw amino-acid sequence, 139 residues long: uncharacterized protein (139 aa).

To E.coli YecT.

This is an uncharacterized protein from Rhizobium meliloti (strain 1021) (Ensifer meliloti).